The following is a 247-amino-acid chain: Probable enoyl-CoA hydratase echA6 (247 aa).

This sequence belongs to the enoyl-CoA hydratase/isomerase family.

The catalysed reaction is a (3S)-3-hydroxyacyl-CoA = a (2E)-enoyl-CoA + H2O. It catalyses the reaction a 4-saturated-(3S)-3-hydroxyacyl-CoA = a (3E)-enoyl-CoA + H2O. Could possibly oxidize fatty acids using specific components. The protein is Probable enoyl-CoA hydratase echA6 (echA6) of Mycobacterium leprae (strain TN).